The chain runs to 310 residues: Olfactory receptor 8B8 (310 aa).

The Extracellular segment spans residues 1 to 27 (MATENASVPEFILAGLTDQPGLRMPLF). N-linked (GlcNAc...) asparagine glycosylation occurs at asparagine 5. A helical membrane pass occupies residues 28 to 48 (FLFLGFYMVTMVGNLGLITLI). Residues 49-55 (GLNSHLH) are Cytoplasmic-facing. Residues 56 to 76 (TPMYFFLFNLSLIDFCYSTVI) traverse the membrane as a helical segment. The Extracellular segment spans residues 77-98 (TPKMLVSFVSKKNIISYSGCMT). A disulfide bond links cysteine 96 and cysteine 188. The chain crosses the membrane as a helical span at residues 99–119 (QLFFFLFFVVSESFILSAMAY). Residues 120–140 (DRYVAICNPLMYTVTMSPQVC) are Cytoplasmic-facing. The chain crosses the membrane as a helical span at residues 141–161 (LLLLLGVYVMGFAGAMAHTAF). At 162-195 (MVKLTFCADKLVNHYMCDILPLLERSCTSTYVNE) the chain is on the extracellular side. A helical membrane pass occupies residues 196–216 (LVVFIVVGIDIGVPTVTIFIS). Topologically, residues 217–238 (YALILSSILRISSTEGRSKAFS) are cytoplasmic. A helical transmembrane segment spans residues 239–259 (TCSSHIIAVSLFFGSGAFMYL). Topologically, residues 260-270 (KPSSLLPMNQG) are extracellular. Residues 271–291 (KVSSLFYTIVVPMLNPLIYSL) form a helical membrane-spanning segment. Over 292–310 (RNKDVKVALRKTLSRSSFS) the chain is Cytoplasmic.

Belongs to the G-protein coupled receptor 1 family.

It is found in the cell membrane. Functionally, odorant receptor. The protein is Olfactory receptor 8B8 of Mus musculus (Mouse).